We begin with the raw amino-acid sequence, 381 residues long: MTAMDRLDHVSNQLAAKRQKKNPEGKPFRITVVGSGNWGSTIAKVVAENAKELPEEFHQIVKMWVFEEEVDGRKLTEIINTDHENVKYLPDVKLPDNIVAIPDIVDACADADIIIFNIPHQFLPKILAQLKGKVNPKARAISCLKGLEVTKDGCKLLSNYITEELGIYCGALSGANLAPEVARQKWSETTVAYRIPQDFRGEGKDVDQSVIRNLFHRPYFHVRVIDDVAGVSLSGALKNVIAMAAGFVEGLGWGDNAKSAVMRIGLVEMIKFAHMFFEDCQSTTFTHESAGVADIITTCAGGRNVRVGRYMAEHKVSGFEAEKVLLNGQSCQGLHTTREVYELLAAKNVIDEFPLFKATYQIIYEGLPMEKLPELLEASED.

The tract at residues 1 to 27 (MTAMDRLDHVSNQLAAKRQKKNPEGKP) is disordered. Residues 34-39 (GSGNWG), Phe66, and Phe122 each bind NAD(+). A substrate-binding site is contributed by Lys145. Ala178 is a binding site for NAD(+). Lys238 (proton acceptor) is an active-site residue. NAD(+) contacts are provided by Arg303 and Gln332. 303–304 (RN) is a binding site for substrate.

This sequence belongs to the NAD-dependent glycerol-3-phosphate dehydrogenase family.

The enzyme catalyses sn-glycerol 3-phosphate + NAD(+) = dihydroxyacetone phosphate + NADH + H(+). The protein is Glycerol-3-phosphate dehydrogenase [NAD(+)] (GPD) of Pichia angusta (Yeast).